Consider the following 157-residue polypeptide: 6,7-dimethyl-8-ribityllumazine synthase (157 aa).

Residues F22, 57 to 59 (AYE), and 81 to 83 (TVI) each bind 5-amino-6-(D-ribitylamino)uracil. 86-87 (GT) is a (2S)-2-hydroxy-3-oxobutyl phosphate binding site. H89 functions as the Proton donor in the catalytic mechanism. Position 114 (F114) interacts with 5-amino-6-(D-ribitylamino)uracil. R128 provides a ligand contact to (2S)-2-hydroxy-3-oxobutyl phosphate.

This sequence belongs to the DMRL synthase family. As to quaternary structure, forms an icosahedral capsid composed of 60 subunits, arranged as a dodecamer of pentamers.

It carries out the reaction (2S)-2-hydroxy-3-oxobutyl phosphate + 5-amino-6-(D-ribitylamino)uracil = 6,7-dimethyl-8-(1-D-ribityl)lumazine + phosphate + 2 H2O + H(+). It participates in cofactor biosynthesis; riboflavin biosynthesis; riboflavin from 2-hydroxy-3-oxobutyl phosphate and 5-amino-6-(D-ribitylamino)uracil: step 1/2. Its function is as follows. Catalyzes the formation of 6,7-dimethyl-8-ribityllumazine by condensation of 5-amino-6-(D-ribitylamino)uracil with 3,4-dihydroxy-2-butanone 4-phosphate. This is the penultimate step in the biosynthesis of riboflavin. The protein is 6,7-dimethyl-8-ribityllumazine synthase of Histophilus somni (strain 129Pt) (Haemophilus somnus).